The chain runs to 1811 residues: Protein virilizer homolog (1811 aa).

The residue at position 2 (Ala-2) is an N-acetylalanine. Residues 132–302 (ISHDRDSPPP…EGDDGYEQIS (171 aa)) are disordered. 2 positions are modified to phosphoserine: Ser-133 and Ser-138. Residues 139–152 (PPPPPPPPPPPQPQ) are compositionally biased toward pro residues. Basic and acidic residues predominate over residues 160 to 169 (KHADGEKEDQ). Residue Ser-173 is modified to Phosphoserine. Pro residues predominate over residues 174–190 (PPRPQPRGPRTPPGPPP). Residue Thr-184 is modified to Phosphothreonine. Ser-222 bears the Phosphoserine mark. Polar residues predominate over residues 224–233 (DRNSVPQEGQ). 2 stretches are compositionally biased toward acidic residues: residues 234 to 267 (YSDE…DEDD) and 274 to 302 (IPDD…EQIS). Residue Tyr-913 is modified to Phosphotyrosine. Ser-1578 carries the phosphoserine modification. Disordered stretches follow at residues 1615 to 1634 (HVVP…GIRP) and 1662 to 1811 (KEVV…SFTR). Gly residues predominate over residues 1688–1697 (GFSGNRGGRG). Residue Thr-1707 is modified to Phosphothreonine. An Omega-N-methylarginine modification is found at Arg-1722. Residues 1722–1747 (RGSSWSAQNTPRGNYNESRGGQSNFN) show a composition bias toward polar residues. Arg-1740 carries the post-translational modification Asymmetric dimethylarginine; alternate. Arg-1740 carries the post-translational modification Omega-N-methylarginine; alternate. Residues Arg-1772, Arg-1774, and Arg-1792 each carry the asymmetric dimethylarginine modification. Positions 1787–1801 (GSGGSRGKFVSGGSG) are enriched in gly residues. Residues 1802-1811 (RGRHVRSFTR) are compositionally biased toward basic residues.

It belongs to the vir family. As to quaternary structure, component of the WMM complex, a N6-methyltransferase complex composed of a catalytic subcomplex, named MAC, and of an associated subcomplex, named MACOM. The MAC subcomplex is composed of METTL3 and METTL14. The MACOM subcomplex is composed of WTAP, ZC3H13, CBLL1/HAKAI, VIRMA, and, in some cases of RBM15 (RBM15 or RBM15B). Interacts with WTAP. Also a component of a MACOM-like complex, named WTAP complex, composed of WTAP, ZC3H13, CBLL1, VIRMA, RBM15, BCLAF1 and THRAP3. Interacts with NUDT21 and CPSF6.

The protein resides in the nucleus speckle. The protein localises to the nucleus. It is found in the nucleoplasm. Its subcellular location is the cytoplasm. Its function is as follows. Associated component of the WMM complex, a complex that mediates N6-methyladenosine (m6A) methylation of RNAs, a modification that plays a role in the efficiency of mRNA splicing and RNA processing. Acts as a key regulator of m6A methylation by promoting m6A methylation of mRNAs in the 3'-UTR near the stop codon: recruits the catalytic core components METTL3 and METTL14, thereby guiding m6A methylation at specific sites. Required for mRNA polyadenylation via its role in selective m6A methylation: m6A methylation of mRNAs in the 3'-UTR near the stop codon correlating with alternative polyadenylation (APA). The polypeptide is Protein virilizer homolog (Mus musculus (Mouse)).